Reading from the N-terminus, the 309-residue chain is Ribonuclease Z (309 aa).

Zn(2+) is bound by residues His-63, His-65, Asp-67, His-68, His-145, Asp-216, and His-274. Asp-67 acts as the Proton acceptor in catalysis.

This sequence belongs to the RNase Z family. Homodimer. The cofactor is Zn(2+).

It carries out the reaction Endonucleolytic cleavage of RNA, removing extra 3' nucleotides from tRNA precursor, generating 3' termini of tRNAs. A 3'-hydroxy group is left at the tRNA terminus and a 5'-phosphoryl group is left at the trailer molecule.. Its function is as follows. Zinc phosphodiesterase, which displays some tRNA 3'-processing endonuclease activity. Probably involved in tRNA maturation, by removing a 3'-trailer from precursor tRNA. The polypeptide is Ribonuclease Z (Streptococcus pyogenes serotype M1).